The following is a 186-amino-acid chain: Peptidyl-tRNA hydrolase (186 aa).

Tyr14 is a tRNA binding site. The active-site Proton acceptor is the His19. Residues Phe64, Asn66, and Asn112 each coordinate tRNA.

The protein belongs to the PTH family. In terms of assembly, monomer.

It is found in the cytoplasm. It catalyses the reaction an N-acyl-L-alpha-aminoacyl-tRNA + H2O = an N-acyl-L-amino acid + a tRNA + H(+). Its function is as follows. Hydrolyzes ribosome-free peptidyl-tRNAs (with 1 or more amino acids incorporated), which drop off the ribosome during protein synthesis, or as a result of ribosome stalling. Functionally, catalyzes the release of premature peptidyl moieties from peptidyl-tRNA molecules trapped in stalled 50S ribosomal subunits, and thus maintains levels of free tRNAs and 50S ribosomes. This chain is Peptidyl-tRNA hydrolase, found in Listeria monocytogenes serovar 1/2a (strain ATCC BAA-679 / EGD-e).